The chain runs to 473 residues: Ribulose bisphosphate carboxylase large chain 2 (473 aa).

Residues Asn116 and Thr166 each contribute to the substrate site. The Proton acceptor role is filled by Lys168. Lys170 serves as a coordination point for substrate. The Mg(2+) site is built by Lys194, Asp196, and Glu197. The residue at position 194 (Lys194) is an N6-carboxylysine. Residue His287 is the Proton acceptor of the active site. Arg288, His320, and Ser372 together coordinate substrate.

This sequence belongs to the RuBisCO large chain family. Type I subfamily. As to quaternary structure, heterohexadecamer of 8 large chains and 8 small chains. Mg(2+) is required as a cofactor.

It catalyses the reaction 2 (2R)-3-phosphoglycerate + 2 H(+) = D-ribulose 1,5-bisphosphate + CO2 + H2O. It carries out the reaction D-ribulose 1,5-bisphosphate + O2 = 2-phosphoglycolate + (2R)-3-phosphoglycerate + 2 H(+). In terms of biological role, ruBisCO catalyzes two reactions: the carboxylation of D-ribulose 1,5-bisphosphate, the primary event in carbon dioxide fixation, as well as the oxidative fragmentation of the pentose substrate. Both reactions occur simultaneously and in competition at the same active site. This chain is Ribulose bisphosphate carboxylase large chain 2, found in Acidithiobacillus ferrooxidans (Thiobacillus ferrooxidans).